Consider the following 161-residue polypeptide: Cytochrome b6-f complex subunit 4 (161 aa).

3 helical membrane passes run 37 to 57 (LLYIFPVVILGSIALCVGLAV), 96 to 116 (LLGVVLMGSIPLGLMLVPFIE), and 132 to 152 (TVFLFGTLFTLWLGIGATFPI).

Belongs to the cytochrome b family. PetD subfamily. The 4 large subunits of the cytochrome b6-f complex are cytochrome b6, subunit IV (17 kDa polypeptide, PetD), cytochrome f and the Rieske protein, while the 4 small subunits are PetG, PetL, PetM and PetN. The complex functions as a dimer.

Its subcellular location is the cellular thylakoid membrane. Component of the cytochrome b6-f complex, which mediates electron transfer between photosystem II (PSII) and photosystem I (PSI), cyclic electron flow around PSI, and state transitions. The protein is Cytochrome b6-f complex subunit 4 of Cyanothece sp. (strain PCC 7425 / ATCC 29141).